A 357-amino-acid chain; its full sequence is MRKKIILTGGGTAGHVMVNVALIPKLKELGWDIVYIGSHQGIEREIIGRIDGVPYYSVSTGKLRRYFDWKNFKDPFNVLKGVWQAYRLIQKEKPDVVFSKGGFVSVPVILGAWLNGVPSVIHESDLTPGLANKIAMPFATKICLTFPETKQYVNADKAVYVGAVVRDELKDGNAEQGRKMCQFDGKKPVLLAMGGSLGSKKINDALRANLSTLLAEFDIIHICGKGNIDPSLAGQKGYKQFEYVNEELPHLLALADIVVSRAGANAIFELLSLRKPMLLIPLSKAASRGDQIANARSFEKAGYAEVLMEEDLTNESLQAAIHRLYENKDRYQKNMEKAGASDPLQTLLAIIQDTARL.

UDP-N-acetyl-alpha-D-glucosamine contacts are provided by residues 12 to 14 (TAG), Arg166, Ser196, and Gln291.

The protein belongs to the glycosyltransferase 28 family. MurG subfamily.

It is found in the cell membrane. It catalyses the reaction di-trans,octa-cis-undecaprenyl diphospho-N-acetyl-alpha-D-muramoyl-L-alanyl-D-glutamyl-meso-2,6-diaminopimeloyl-D-alanyl-D-alanine + UDP-N-acetyl-alpha-D-glucosamine = di-trans,octa-cis-undecaprenyl diphospho-[N-acetyl-alpha-D-glucosaminyl-(1-&gt;4)]-N-acetyl-alpha-D-muramoyl-L-alanyl-D-glutamyl-meso-2,6-diaminopimeloyl-D-alanyl-D-alanine + UDP + H(+). The protein operates within cell wall biogenesis; peptidoglycan biosynthesis. In terms of biological role, cell wall formation. Catalyzes the transfer of a GlcNAc subunit on undecaprenyl-pyrophosphoryl-MurNAc-pentapeptide (lipid intermediate I) to form undecaprenyl-pyrophosphoryl-MurNAc-(pentapeptide)GlcNAc (lipid intermediate II). This Geobacillus kaustophilus (strain HTA426) protein is UDP-N-acetylglucosamine--N-acetylmuramyl-(pentapeptide) pyrophosphoryl-undecaprenol N-acetylglucosamine transferase.